A 128-amino-acid chain; its full sequence is Large-conductance mechanosensitive channel (128 aa).

Transmembrane regions (helical) follow at residues Phe11–Gly31 and Gly70–Val90.

Belongs to the MscL family. As to quaternary structure, homopentamer.

It is found in the cell membrane. Its function is as follows. Channel that opens in response to stretch forces in the membrane lipid bilayer. May participate in the regulation of osmotic pressure changes within the cell. The sequence is that of Large-conductance mechanosensitive channel from Listeria monocytogenes serotype 4a (strain HCC23).